Reading from the N-terminus, the 362-residue chain is Outer mitochondrial transmembrane helix translocase (362 aa).

Residues 1–19 (MVLKEIPTENITRPLGRNE) lie on the Mitochondrial intermembrane side of the membrane. The chain crosses the membrane as a helical span at residues 20–42 (VIGLLFRLTIFGAVTYFTIKWMV). Residues 43 to 362 (DAIDPTRKQK…HEAFMQVPLD (320 aa)) are Cytoplasmic-facing. 137 to 144 (GPPGCGKT) is a binding site for ATP.

This sequence belongs to the AAA ATPase family. MSP1 subfamily.

It is found in the mitochondrion outer membrane. The protein localises to the peroxisome membrane. The protein resides in the postsynaptic cell membrane. It carries out the reaction [protein]-with a C-terminal TM segment(out) + ATP + H2O = [protein]-with a C-terminal TM segment(in) + ADP + phosphate + H(+). Functionally, outer mitochondrial translocase required to remove mislocalized tail-anchored transmembrane proteins on mitochondria. Specifically recognizes and binds tail-anchored transmembrane proteins: acts as a dislocase that mediates the ATP-dependent extraction of mistargeted tail-anchored transmembrane proteins from the mitochondrion outer membrane. Also plays a critical role in regulating the surface expression of AMPA receptors (AMPAR), thereby regulating synaptic plasticity and learning and memory. This Danio rerio (Zebrafish) protein is Outer mitochondrial transmembrane helix translocase.